The primary structure comprises 211 residues: Envelope protein UL45 homolog (211 aa).

Residues 1 to 46 (MMSPTPEDDRDLVVVRGRLRMMDNGAEHDRERRSYTAWPHLCCGCT) are Intravirion-facing. A helical; Signal-anchor for type II membrane protein membrane pass occupies residues 47–67 (IGIILTMFVIATTLLLASLFA). Topologically, residues 68 to 211 (FSYMSLESGT…SSILSNAIMK (144 aa)) are virion surface. Residues asparagine 96 and asparagine 133 are each glycosylated (N-linked (GlcNAc...) asparagine; by host).

The protein belongs to the herpesviridae HHV-1 UL45 family.

Its subcellular location is the virion membrane. The chain is Envelope protein UL45 homolog (UL45H) from Gallid herpesvirus 2 (strain Chicken/Md5/ATCC VR-987) (GaHV-2).